Consider the following 484-residue polypeptide: Chromosomal replication initiator protein DnaA (484 aa).

The domain I, interacts with DnaA modulators stretch occupies residues 1–73 (MQEGKNIWSL…EILIEKGHST (73 aa)). A domain II region spans residues 73–140 (TINVEFIHSQ…EEIHIKYRNP (68 aa)). Residues 141-357 (FLKKKYTFEN…AAVTKLKAHI (217 aa)) are domain III, AAA+ region. ATP-binding residues include glycine 185, glycine 187, lysine 188, and threonine 189. Positions 358-484 (DLEDIEIDTN…IELMNKINKN (127 aa)) are domain IV, binds dsDNA.

The protein belongs to the DnaA family. Oligomerizes as a right-handed, spiral filament on DNA at oriC.

Its subcellular location is the cytoplasm. Functionally, plays an essential role in the initiation and regulation of chromosomal replication. ATP-DnaA binds to the origin of replication (oriC) to initiate formation of the DNA replication initiation complex once per cell cycle. Binds the DnaA box (a 9 base pair repeat at the origin) and separates the double-stranded (ds)DNA. Forms a right-handed helical filament on oriC DNA; dsDNA binds to the exterior of the filament while single-stranded (ss)DNA is stabiized in the filament's interior. The ATP-DnaA-oriC complex binds and stabilizes one strand of the AT-rich DNA unwinding element (DUE), permitting loading of DNA polymerase. After initiation quickly degrades to an ADP-DnaA complex that is not apt for DNA replication. Binds acidic phospholipids. The protein is Chromosomal replication initiator protein DnaA of Borrelia duttonii (strain Ly).